Consider the following 491-residue polypeptide: Katanin p60 ATPase-containing subunit A1 (491 aa).

Positions M1 to Y29 are interaction with KATNB1. The tract at residues M1–S75 is interaction with dynein and NDEL1. The interval M1–T185 is interaction with microtubules. At S42 the chain carries Phosphoserine; by DYRK2. The interval Q87–D183 is disordered. The segment covering H145–K169 has biased composition (basic and acidic residues). G249–T256 contributes to the ATP binding site.

The protein belongs to the AAA ATPase family. Katanin p60 subunit A1 subfamily. In terms of assembly, can homooligomerize into hexameric rings, which may be promoted by interaction with microtubules. Interacts with KATNB1, which may serve as a targeting subunit. Interacts with ASPM; the katanin complex formation KATNA1:KATNB1 is required for the association of ASPM. Interacts with dynein and NDEL1. Associates with the E3 ligase complex containing DYRK2, EDD/UBR5, DDB1 and DCAF1 proteins (EDVP complex). Interacts with KLHL42 (via the kelch domains). Interacts with CUL3; the interaction is enhanced by KLHL42. Interacts with KATNB1 and KATNBL1. In terms of processing, phosphorylation by DYRK2 triggers ubiquitination and subsequent degradation. Post-translationally, ubiquitinated by the BCR(KLHL42) E3 ubiquitin ligase complex, leading to its proteasomal degradation. Ubiquitinated by the EDVP E3 ligase complex and subsequently targeted for proteasomal degradation.

Its subcellular location is the cytoplasm. It is found in the midbody. The protein localises to the cytoskeleton. The protein resides in the microtubule organizing center. It localises to the centrosome. Its subcellular location is the spindle pole. It is found in the spindle. The enzyme catalyses n ATP + n H2O + a microtubule = n ADP + n phosphate + (n+1) alpha/beta tubulin heterodimers.. Its activity is regulated as follows. ATPase activity is stimulated by microtubules, which promote homooligomerization. ATP-dependent microtubule severing is stimulated by interaction with KATNB1. Catalytic subunit of a complex which severs microtubules in an ATP-dependent manner. Microtubule severing may promote rapid reorganization of cellular microtubule arrays and the release of microtubules from the centrosome following nucleation. Microtubule release from the mitotic spindle poles may allow depolymerization of the microtubule end proximal to the spindle pole, leading to poleward microtubule flux and poleward motion of chromosome. Microtubule release within the cell body of neurons may be required for their transport into neuronal processes by microtubule-dependent motor proteins. This transport is required for axonal growth. The polypeptide is Katanin p60 ATPase-containing subunit A1 (Katna1) (Rattus norvegicus (Rat)).